Reading from the N-terminus, the 362-residue chain is Chorismate synthase (362 aa).

NADP(+) contacts are provided by R48 and R54. Residues 125–127 (RSS), 238–239 (NA), G278, 293–297 (KPTSS), and R319 contribute to the FMN site.

It belongs to the chorismate synthase family. Homotetramer. FMNH2 serves as cofactor.

The catalysed reaction is 5-O-(1-carboxyvinyl)-3-phosphoshikimate = chorismate + phosphate. It functions in the pathway metabolic intermediate biosynthesis; chorismate biosynthesis; chorismate from D-erythrose 4-phosphate and phosphoenolpyruvate: step 7/7. Its function is as follows. Catalyzes the anti-1,4-elimination of the C-3 phosphate and the C-6 proR hydrogen from 5-enolpyruvylshikimate-3-phosphate (EPSP) to yield chorismate, which is the branch point compound that serves as the starting substrate for the three terminal pathways of aromatic amino acid biosynthesis. This reaction introduces a second double bond into the aromatic ring system. This chain is Chorismate synthase, found in Aeromonas salmonicida (strain A449).